Here is a 195-residue protein sequence, read N- to C-terminus: Orotate phosphoribosyltransferase (195 aa).

5-phospho-alpha-D-ribose 1-diphosphate contacts are provided by residues Arg87, Lys91, and 112–120 (DDVATTGGS). Orotate-binding residues include Thr116 and Arg144.

This sequence belongs to the purine/pyrimidine phosphoribosyltransferase family. PyrE subfamily. As to quaternary structure, homodimer. Mg(2+) is required as a cofactor.

It catalyses the reaction orotidine 5'-phosphate + diphosphate = orotate + 5-phospho-alpha-D-ribose 1-diphosphate. The protein operates within pyrimidine metabolism; UMP biosynthesis via de novo pathway; UMP from orotate: step 1/2. Catalyzes the transfer of a ribosyl phosphate group from 5-phosphoribose 1-diphosphate to orotate, leading to the formation of orotidine monophosphate (OMP). In Sulfurisphaera tokodaii (strain DSM 16993 / JCM 10545 / NBRC 100140 / 7) (Sulfolobus tokodaii), this protein is Orotate phosphoribosyltransferase.